A 149-amino-acid chain; its full sequence is Nucleoside diphosphate kinase 1 (149 aa).

ATP is bound by residues Lys9, Phe57, Arg85, Thr91, Arg102, and Asn112. Catalysis depends on His115, which acts as the Pros-phosphohistidine intermediate.

In terms of assembly, homohexamer. Mg(2+) is required as a cofactor.

The catalysed reaction is a 2'-deoxyribonucleoside 5'-diphosphate + ATP = a 2'-deoxyribonucleoside 5'-triphosphate + ADP. It carries out the reaction a ribonucleoside 5'-diphosphate + ATP = a ribonucleoside 5'-triphosphate + ADP. Major role in the synthesis of nucleoside triphosphates other than ATP. The ATP gamma phosphate is transferred to the NDP beta phosphate via a ping-pong mechanism, using a phosphorylated active-site intermediate. This NDK is microtubule-associated. The sequence is that of Nucleoside diphosphate kinase 1 (NDKR) from Oryza sativa subsp. indica (Rice).